Here is a 476-residue protein sequence, read N- to C-terminus: Glutamate--tRNA ligase (476 aa).

The 'HIGH' region motif lies at 9-19 (PSPTGTLHLGT). The 'KMSKS' region signature appears at 248 to 252 (KLSKR). K251 contributes to the ATP binding site.

Belongs to the class-I aminoacyl-tRNA synthetase family. Glutamate--tRNA ligase type 1 subfamily. In terms of assembly, monomer.

The protein localises to the cytoplasm. It carries out the reaction tRNA(Glu) + L-glutamate + ATP = L-glutamyl-tRNA(Glu) + AMP + diphosphate. Functionally, catalyzes the attachment of glutamate to tRNA(Glu) in a two-step reaction: glutamate is first activated by ATP to form Glu-AMP and then transferred to the acceptor end of tRNA(Glu). In Prochlorococcus marinus (strain NATL1A), this protein is Glutamate--tRNA ligase.